The chain runs to 159 residues: Ribosomal RNA large subunit methyltransferase H (159 aa).

The S-adenosyl-L-methionine site is built by leucine 76 and glycine 108.

Belongs to the RNA methyltransferase RlmH family. Homodimer.

Its subcellular location is the cytoplasm. It catalyses the reaction pseudouridine(1915) in 23S rRNA + S-adenosyl-L-methionine = N(3)-methylpseudouridine(1915) in 23S rRNA + S-adenosyl-L-homocysteine + H(+). Specifically methylates the pseudouridine at position 1915 (m3Psi1915) in 23S rRNA. The polypeptide is Ribosomal RNA large subunit methyltransferase H (Levilactobacillus brevis (strain ATCC 367 / BCRC 12310 / CIP 105137 / JCM 1170 / LMG 11437 / NCIMB 947 / NCTC 947) (Lactobacillus brevis)).